A 253-amino-acid chain; its full sequence is MKIIIAPAKIMKIDRDSFPVQSKPEFLDKTRILEEFLKSRSEDQLIELWHASKKVTEQSIEQLKNMNLDKRLTPAILAFSGIQYQYMAPDLFTQPALDYIQKNLRILSGFYGMLRPFDGVCPYRLELNTKMKGFIDYSLYHFWNDQIAESLFKEDDTVINLASKQYMRLVKPYLNENRKMITIDFQELKNDQWKTVGVHAKMARGEMVRFIAENQMKNPAELRDFHDFEFQYSPEASSLDHYVFRTHFDFKRH.

The protein belongs to the UPF0246 family.

The sequence is that of UPF0246 protein lhv_1883 from Lactobacillus helveticus (strain DPC 4571).